We begin with the raw amino-acid sequence, 426 residues long: Pyruvate, phosphate dikinase regulatory protein, chloroplastic (426 aa).

The transit peptide at 1–41 directs the protein to the chloroplast; it reads MIGCAKPLAAPLQAWARPPSPAGRRLPPSFCAPDTSPALTR. Disordered stretches follow at residues 1–76 and 94–124; these read MIGC…HLDR and AALS…DGED. Over residues 94 to 119 the composition is skewed to low complexity; the sequence is AALSSASVSAPPVIKSPRPEDAAVAA. An ADP-binding site is contributed by 153 to 160; sequence HSVNAALG.

Belongs to the pyruvate, phosphate/water dikinase regulatory protein family. PDRP subfamily. As to quaternary structure, homodimer at pH 7.5 and homotetramer at pH 8.3. The cofactor is Mg(2+). As to expression, leaf mesophyll-cells.

It is found in the plastid. It localises to the chloroplast stroma. The enzyme catalyses N(tele)-phospho-L-histidyl/L-threonyl-[pyruvate, phosphate dikinase] + ADP = N(tele)-phospho-L-histidyl/O-phospho-L-threonyl-[pyruvate, phosphate dikinase] + AMP + H(+). It carries out the reaction N(tele)-phospho-L-histidyl/O-phospho-L-threonyl-[pyruvate, phosphate dikinase] + phosphate + H(+) = N(tele)-phospho-L-histidyl/L-threonyl-[pyruvate, phosphate dikinase] + diphosphate. Its pathway is photosynthesis; C4 acid pathway. Its activity is regulated as follows. Regulated by light/dark exposure. In terms of biological role, bifunctional serine/threonine kinase and phosphorylase involved in the dark/light-mediated regulation of PPDK by catalyzing its phosphorylation/dephosphorylation. Dark/light-induced changes in stromal concentrations of the competing ADP and Pi substrates govern the direction of the reaction. In the dark, phosphorylates the catalytic intermediate of PPDK (PPDK-HisP), inactivating it. Light exposure induces the phosphorolysis reaction that reactivates PPDK. Phosphorylates PPDK at both Ser-528 and Thr-527. Can use ADP as a high specificity substrate and GDP as a lower affinity substrate, but has no activity with UDP. This Zea mays (Maize) protein is Pyruvate, phosphate dikinase regulatory protein, chloroplastic (PDRP1).